Consider the following 199-residue polypeptide: NAD(P)H dehydrogenase (quinone) (199 aa).

A Flavodoxin-like domain is found at 4-190; the sequence is VLVLYYSSYG…TGARYQGRKI (187 aa). Residues 10-15 and 78-80 each bind FMN; these read SSYGHL and TRF. Tyr12 provides a ligand contact to NAD(+). A substrate-binding site is contributed by Trp98. FMN contacts are provided by residues 113–119 and His134; that span reads STATQHG.

Belongs to the WrbA family. It depends on FMN as a cofactor.

It carries out the reaction a quinone + NADH + H(+) = a quinol + NAD(+). It catalyses the reaction a quinone + NADPH + H(+) = a quinol + NADP(+). The chain is NAD(P)H dehydrogenase (quinone) from Caulobacter vibrioides (strain ATCC 19089 / CIP 103742 / CB 15) (Caulobacter crescentus).